We begin with the raw amino-acid sequence, 486 residues long: MEKWWLNSMLSNEDLGRRCGLSASLGPIGNTSGSEEPIINDSEKNVNSWSGRGSYSCSNVDYLFNLGGVKDVWSLISGETFWVRDSNGDSYSIYFDIENKIFEIDTDSYFLGELESLFSSYLNLNNGSKSYNRYYDHYVYDTRHSWKSHINSCIDSYIRSETNMDSCIPNGSNNSSDNYIYSYICSDSERGSDRGSSNLKTSGVSDSDFGRHNDLDRNKRYRHLWVQCENCYGLNYKKFFSSKMNICEQCGYHLKMSSSDRIELLIDPGTWDPMDENMVSMDPIEFHSEEDPYRDRINSYQIETGLAEAVQTGIGKLNGIPIAIGVMDFKFMGGSMGSVVGEKITRLIEYATDRSLPVIMVCASGGARMQEGSLSLMQMAKISSALYNYQSNKKLFYVSILTSPTTGGVTASFGMLGDIIIAEPNAYIAFAGKRVIEQTLKKTVPEGSQVAEYLFNKGLFDPIVPRNLLKGVPSELFQFHGFFPRP.

The 263-residue stretch at 224-486 (LWVQCENCYG…FQFHGFFPRP (263 aa)) folds into the CoA carboxyltransferase N-terminal domain. Zn(2+)-binding residues include Cys228, Cys231, Cys247, and Cys250. Residues 228–250 (CENCYGLNYKKFFSSKMNICEQC) form a C4-type zinc finger.

It belongs to the AccD/PCCB family. As to quaternary structure, acetyl-CoA carboxylase is a heterohexamer composed of biotin carboxyl carrier protein, biotin carboxylase and 2 subunits each of ACCase subunit alpha and ACCase plastid-coded subunit beta (accD). Zn(2+) is required as a cofactor.

The protein localises to the plastid. It localises to the chloroplast stroma. It catalyses the reaction N(6)-carboxybiotinyl-L-lysyl-[protein] + acetyl-CoA = N(6)-biotinyl-L-lysyl-[protein] + malonyl-CoA. The protein operates within lipid metabolism; malonyl-CoA biosynthesis; malonyl-CoA from acetyl-CoA: step 1/1. Its function is as follows. Component of the acetyl coenzyme A carboxylase (ACC) complex. Biotin carboxylase (BC) catalyzes the carboxylation of biotin on its carrier protein (BCCP) and then the CO(2) group is transferred by the transcarboxylase to acetyl-CoA to form malonyl-CoA. This Nymphaea alba (White water-lily) protein is Acetyl-coenzyme A carboxylase carboxyl transferase subunit beta, chloroplastic.